The following is a 396-amino-acid chain: Elongation factor Tu (396 aa).

The tr-type G domain maps to 10-206 (KPHVNVGTIG…AMDEYIPTPE (197 aa)). The interval 19 to 26 (GHVDHGKT) is G1. GTP is bound at residue 19–26 (GHVDHGKT). A Mg(2+)-binding site is contributed by Thr26. The tract at residues 60–64 (GITIA) is G2. The segment at 81-84 (DCPG) is G3. GTP contacts are provided by residues 81-85 (DCPGH) and 136-139 (NKAD). The tract at residues 136–139 (NKAD) is G4. A G5 region spans residues 174 to 176 (SAL).

This sequence belongs to the TRAFAC class translation factor GTPase superfamily. Classic translation factor GTPase family. EF-Tu/EF-1A subfamily. Monomer.

The protein resides in the cytoplasm. It catalyses the reaction GTP + H2O = GDP + phosphate + H(+). GTP hydrolase that promotes the GTP-dependent binding of aminoacyl-tRNA to the A-site of ribosomes during protein biosynthesis. In Alkalilimnicola ehrlichii (strain ATCC BAA-1101 / DSM 17681 / MLHE-1), this protein is Elongation factor Tu.